The sequence spans 414 residues: Serine hydroxymethyltransferase (414 aa).

Residues leucine 117 and 121 to 123 (GHL) each bind (6S)-5,6,7,8-tetrahydrofolate. Lysine 226 is modified (N6-(pyridoxal phosphate)lysine). A (6S)-5,6,7,8-tetrahydrofolate-binding site is contributed by 349 to 351 (SPF).

The protein belongs to the SHMT family. Homodimer. It depends on pyridoxal 5'-phosphate as a cofactor.

The protein resides in the cytoplasm. It catalyses the reaction (6R)-5,10-methylene-5,6,7,8-tetrahydrofolate + glycine + H2O = (6S)-5,6,7,8-tetrahydrofolate + L-serine. Its pathway is one-carbon metabolism; tetrahydrofolate interconversion. It functions in the pathway amino-acid biosynthesis; glycine biosynthesis; glycine from L-serine: step 1/1. Its function is as follows. Catalyzes the reversible interconversion of serine and glycine with tetrahydrofolate (THF) serving as the one-carbon carrier. This reaction serves as the major source of one-carbon groups required for the biosynthesis of purines, thymidylate, methionine, and other important biomolecules. Also exhibits THF-independent aldolase activity toward beta-hydroxyamino acids, producing glycine and aldehydes, via a retro-aldol mechanism. The sequence is that of Serine hydroxymethyltransferase from Desulfovibrio desulfuricans (strain ATCC 27774 / DSM 6949 / MB).